A 321-amino-acid polypeptide reads, in one-letter code: Zinc finger protein 524 (321 aa).

Polar residues-rich tracts occupy residues 1–14 (MDNPSSDPLPSTLS) and 39–48 (ATTSNRTLKS). 2 disordered regions span residues 1–80 (MDNP…DLLL) and 86–105 (VPYTVPEGSAADGPQGSGSK). The a.T hook DNA-binding region spans 49 to 59 (SLPRKRGRPPR). 4 C2H2-type zinc fingers span residues 109–131 (HFCPVCLRAFPYLSDLERHSISH), 137–159 (HVCKDCGKTFKRSSHLRRHCNIH), 165–187 (FRCVLCPRRFREAGELAHHHRIH), and 193–216 (YQCPSCRVRFTEANTLRRHYKRKH). Positions 248–321 (GVQEESPEGK…PGAIGHPPVD (74 aa)) are disordered. Residues 262–271 (PISSTTSPLS) show a composition bias toward polar residues. Residues 274-285 (TAGGSAGAGRGQ) are compositionally biased toward gly residues.

The protein belongs to the krueppel C2H2-type zinc-finger protein family.

Its subcellular location is the nucleus. Its function is as follows. May be involved in transcriptional regulation. The protein is Zinc finger protein 524 (Znf524) of Mus musculus (Mouse).